Here is a 96-residue protein sequence, read N- to C-terminus: MSWFRWDGDDLILECHLQPAARSDDFCGLHGDRLKIRLTAPPVEGKANAYLMGFLAKAFGVSKSQVSLLSGELNRQKRVRIGAPKKLPDLPGLCRP.

Belongs to the UPF0235 family.

This is UPF0235 protein Pfl01_5322 from Pseudomonas fluorescens (strain Pf0-1).